Consider the following 337-residue polypeptide: DNA-directed RNA polymerase subunit alpha (337 aa).

An alpha N-terminal domain (alpha-NTD) region spans residues 1–233 (MIQKNWQELI…DQLAIFVNFE (233 aa)). Positions 249 to 337 (FNPALLKKVD…DLAKRYEDQY (89 aa)) are alpha C-terminal domain (alpha-CTD).

It belongs to the RNA polymerase alpha chain family. As to quaternary structure, homodimer. The RNAP catalytic core consists of 2 alpha, 1 beta, 1 beta' and 1 omega subunit. When a sigma factor is associated with the core the holoenzyme is formed, which can initiate transcription.

It carries out the reaction RNA(n) + a ribonucleoside 5'-triphosphate = RNA(n+1) + diphosphate. In terms of biological role, DNA-dependent RNA polymerase catalyzes the transcription of DNA into RNA using the four ribonucleoside triphosphates as substrates. The chain is DNA-directed RNA polymerase subunit alpha from Brucella anthropi (strain ATCC 49188 / DSM 6882 / CCUG 24695 / JCM 21032 / LMG 3331 / NBRC 15819 / NCTC 12168 / Alc 37) (Ochrobactrum anthropi).